A 465-amino-acid chain; its full sequence is NADH-quinone oxidoreductase subunit N (465 aa).

13 helical membrane passes run 6 to 26 (ILPE…GIVF), 30 to 50 (TINL…ILSA), 66 to 86 (LYIR…LLLL), 98 to 118 (SILI…NNLI), 156 to 176 (ALSS…TGLV), 194 to 214 (IVFG…IAPF), 226 to 246 (PTIV…TFLI), 261 to 281 (FQPV…FGAL), 289 to 309 (LLAY…SIFT), 317 to 337 (LIYL…FIQI), 363 to 383 (ILLF…KLFI), 391 to 411 (GFIG…YYYL), and 432 to 452 (SLFI…MCVE).

It belongs to the complex I subunit 2 family. As to quaternary structure, NDH-1 is composed of 14 different subunits. Subunits NuoA, H, J, K, L, M, N constitute the membrane sector of the complex.

Its subcellular location is the cell membrane. It carries out the reaction a quinone + NADH + 5 H(+)(in) = a quinol + NAD(+) + 4 H(+)(out). NDH-1 shuttles electrons from NADH, via FMN and iron-sulfur (Fe-S) centers, to quinones in the respiratory chain. The immediate electron acceptor for the enzyme in this species is believed to be ubiquinone. Couples the redox reaction to proton translocation (for every two electrons transferred, four hydrogen ions are translocated across the cytoplasmic membrane), and thus conserves the redox energy in a proton gradient. The polypeptide is NADH-quinone oxidoreductase subunit N (Wolbachia sp. subsp. Brugia malayi (strain TRS)).